The sequence spans 511 residues: uncharacterized protein (511 aa).

The 253-residue stretch at 2–254 folds into the CoA carboxyltransferase N-terminal domain; the sequence is LMDYEKERTE…NFQEKAPIHE (253 aa). Residues 2–506 form a carboxyltransferase region; it reads LMDYEKERTE…KEMTFTNRKH (505 aa). The 247-residue stretch at 260 to 506 folds into the CoA carboxyltransferase C-terminal domain; it reads HFETPLADVI…KEMTFTNRKH (247 aa).

Belongs to the AccD/PCCB family.

This is an uncharacterized protein from Bacillus subtilis (strain 168).